A 465-amino-acid chain; its full sequence is Cysteine--tRNA ligase (465 aa).

Zn(2+) is bound at residue C30. The short motif at 32–42 (ITVYDYCHVGH) is the 'HIGH' region element. Positions 214, 239, and 243 each coordinate Zn(2+). Residues 271–275 (KMSKS) carry the 'KMSKS' region motif. K274 is an ATP binding site.

This sequence belongs to the class-I aminoacyl-tRNA synthetase family. As to quaternary structure, monomer. Zn(2+) is required as a cofactor.

Its subcellular location is the cytoplasm. It catalyses the reaction tRNA(Cys) + L-cysteine + ATP = L-cysteinyl-tRNA(Cys) + AMP + diphosphate. This chain is Cysteine--tRNA ligase, found in Burkholderia orbicola (strain MC0-3).